The chain runs to 1477 residues: Neurexin-1 (1477 aa).

An N-terminal signal peptide occupies residues 1–30 (MGTALLQRGGCFLLCLSLLLLGCWAELGSG). A Laminin G-like 1 domain is found at 31-217 (LEFPGAEGQW…PPNSGGGSPC (187 aa)). Topologically, residues 31–1401 (LEFPGAEGQW…EVIRESSSTT (1371 aa)) are extracellular. Asn125 and Asn190 each carry an N-linked (GlcNAc...) asparagine glycan. The segment at 198 to 221 (DSGEVKLDDEPPNSGGGSPCEAGE) is disordered. The region spanning 213 to 256 (GGSPCEAGEEGEGGVCLNGGVCSVVDDQAVCDCSRTGFRGKDCS) is the EGF-like 1 domain. 2 disulfide bridges follow: Cys228–Cys243 and Cys245–Cys255. Laminin G-like domains lie at 283 to 473 (IATF…AFKC) and 480 to 672 (DPIT…KPSC). Ca(2+) contacts are provided by Asp329, Leu346, and Met407. Intrachain disulfides connect Cys437–Cys473, Cys643–Cys672, Cys680–Cys691, Cys685–Cys700, and Cys702–Cys712. Residues 676–713 (TAKPCLSNPCKNNGMCRDGWNRYVCDCSGTGYLGRSCE) form the EGF-like 2 domain. Laminin G-like domains follow at residues 718 to 891 (VLSY…IDYC) and 905 to 1080 (DPVT…ERGC). Residues Asp765 and Leu782 each contribute to the Ca(2+) site. The N-linked (GlcNAc...) asparagine glycan is linked to Asn790. Arg841 serves as a coordination point for Ca(2+). 5 cysteine pairs are disulfide-bonded: Cys883/Cys891, Cys1052/Cys1080, Cys1087/Cys1098, Cys1092/Cys1107, and Cys1109/Cys1119. One can recognise an EGF-like 3 domain in the interval 1083–1120 (PSTTCQEDSCSNQGVCLQQWDGFSCDCSMTSFSGPLCN). In terms of domain architecture, Laminin G-like 6 spans 1126–1294 (YIFSKGGGQI…DANIAIVGNV (169 aa)). The Ca(2+) site is built by Asp1176 and Val1193. Asn1223 is a glycosylation site (N-linked (GlcNAc...) asparagine). Ca(2+) contacts are provided by Ile1245 and Asn1247. A disordered region spans residues 1325–1390 (TTTLATSTAR…AGGREPYPGS (66 aa)). An O-linked (Xyl...) (heparan sulfate) serine glycan is attached at Ser1355. Residues 1402 to 1422 (GMVVGIVAAAALCILILLYAM) traverse the membrane as a helical segment. The Cytoplasmic segment spans residues 1423-1477 (YKYRNRDEGSYHVDESRNYISNSAQSNGAVVKEKQPSSAKSSNKNKKNKDKEYYV). Residues 1444-1470 (NSAQSNGAVVKEKQPSSAKSSNKNKKN) are interaction with CASK. Positions 1444–1477 (NSAQSNGAVVKEKQPSSAKSSNKNKKNKDKEYYV) are disordered.

The protein belongs to the neurexin family. Interacts (via laminin G-like domain 2 and/or laminin G-like domain 6) with NLGN1 forming a heterotetramer, where one NLGN1 dimer interacts with one NRXN1 dimer. Also interacts (via laminin G-like domain 2 and/or laminin G-like domain 6) with NLGN2, NLGN3 and NLGN4L; interactions with NLGN1, NLGN2, NLGN3 and NLGN4L are calcium-dependent. Interacts (via cytoplasmic C-terminal region) with CASK (via the PDZ, SH3 and guanylate kinase-like domains). Interacts (via cytoplasmic C-terminus) with CASKIN1 and APBA1. Interacts (via laminin G-like domain 2) with NXPH1 and NXPH3. Alpha-type isoforms (neurexin-1-alpha) interact (via laminin G-like domain 2 and/or laminin G-like domain 6) with DAG1 (via alpha-dystroglycan chain). Interacts with LRRTM1, LRRTM2, LRRTM3 and LRRTM4. Interacts with SYT13 and SYTL1. Interacts with CBLN1, CBLN2 and, less avidly, with CBLN4. Interacts with CLSTN3. O-glycosylated; contains heparan sulfate. Heparan sulfate attachment is required for synapse development by mediating interactions with neuroligins and LRRTM2. Brain.

It localises to the presynaptic cell membrane. Cell surface protein involved in cell-cell-interactions, exocytosis of secretory granules and regulation of signal transmission. Function is isoform-specific. Alpha-type isoforms have a long N-terminus with six laminin G-like domains and play an important role in synaptic signal transmission. Alpha-type isoforms play a role in the regulation of calcium channel activity and Ca(2+)-triggered neurotransmitter release at synapses and at neuromuscular junctions. They play an important role in Ca(2+)-triggered exocytosis of secretory granules in pituitary gland. They may affect their functions at synapses and in endocrine cells via their interactions with proteins from the exocytotic machinery. Likewise, alpha-type isoforms play a role in regulating the activity of postsynaptic NMDA receptors, a subtype of glutamate-gated ion channels. Both alpha-type and beta-type isoforms may play a role in the formation or maintenance of synaptic junctions via their interactions (via the extracellular domains) with neuroligin family members, CBLN1 or CBLN2. In vitro, triggers the de novo formation of presynaptic structures. May be involved in specification of excitatory synapses. Alpha-type isoforms were first identified as receptors for alpha-latrotoxin from spider venom. This Homo sapiens (Human) protein is Neurexin-1 (NRXN1).